Consider the following 234-residue polypeptide: Phosphoribosylaminoimidazole-succinocarboxamide synthase (234 aa).

This sequence belongs to the SAICAR synthetase family.

The enzyme catalyses 5-amino-1-(5-phospho-D-ribosyl)imidazole-4-carboxylate + L-aspartate + ATP = (2S)-2-[5-amino-1-(5-phospho-beta-D-ribosyl)imidazole-4-carboxamido]succinate + ADP + phosphate + 2 H(+). Its pathway is purine metabolism; IMP biosynthesis via de novo pathway; 5-amino-1-(5-phospho-D-ribosyl)imidazole-4-carboxamide from 5-amino-1-(5-phospho-D-ribosyl)imidazole-4-carboxylate: step 1/2. This chain is Phosphoribosylaminoimidazole-succinocarboxamide synthase, found in Clostridium botulinum (strain Loch Maree / Type A3).